The primary structure comprises 741 residues: Mitofusin-1 (741 aa).

Residues 1–584 (MAEPVSPLKH…ASQEELMITL (584 aa)) are Cytoplasmic-facing. The interval 9-73 (KHFVLAKKAI…LSIIGEVLSR (65 aa)) is part of a helix bundle domain, formed by helices from N-terminal and C-terminal regions. The Dynamin-type G domain occupies 72–321 (SRRHMKVAFF…ARLQEFQNFE (250 aa)). Positions 82–89 (GRTSSGKS) are G1 motif. 85–90 (SSGKSS) serves as a coordination point for GTP. The tract at residues 108–109 (IT) is G2 motif. Positions 178–181 (DSPG) are G3 motif. 237 to 240 (NRWD) serves as a coordination point for GTP. Positions 237–240 (NRWD) are G4 motif. Position 266 (glutamate 266) is a region of interest, G5 motif. Positions 284 and 286 each coordinate GTP. Positions 338–364 (EQHTIRAKQILATVKNIMDSVNLAAED) are part of a helix bundle domain, formed by helices from N-terminal and C-terminal regions. Residues 371 to 408 (EEREDQIDRLDFIRNQMNLLTLDVKKKIKEVTEEVANK) adopt a coiled-coil conformation. Residues 585–605 (VTGLASVTSRTSMGIIIVGGV) traverse the membrane as a helical segment. The Mitochondrial intermembrane portion of the chain corresponds to 606 to 608 (IWK). Residues 609-629 (TIGWKLLSVSLTMYGALYLYE) traverse the membrane as a helical segment. Over 630–741 (RLSWTTHAKE…QFLPSSNEES (112 aa)) the chain is Cytoplasmic. Residues 679–734 (RLCQQVDITQKQLEEEIARLPKEIDQLEKIQNNSKLLRNKAVQLENELENFTKQFL) adopt a coiled-coil conformation. The part of a helix bundle domain, formed by helices from N-terminal and C-terminal regions stretch occupies residues 703–734 (DQLEKIQNNSKLLRNKAVQLENELENFTKQFL).

This sequence belongs to the TRAFAC class dynamin-like GTPase superfamily. Dynamin/Fzo/YdjA family. Mitofusin subfamily. Homodimer, also in the absence of bound GTP. Forms higher oligomers in the presence of a transition state GTP analog. Forms homomultimers and heteromultimers with MFN2. Oligomerization is essential for mitochondrion fusion. Component of a high molecular weight multiprotein complex. Interacts with VAT1. Interacts with THG1L; THG1L probably functions as a guanyl-nucleotide exchange factor/GEF, activating MFN1. Ubiquitinated by non-degradative ubiquitin by PRKN. Deubiquitination by USP30 inhibits mitochondrial fusion. Ubiquitinated by MARCHF5. When mitochondria are depolarized and dysfunctional, it is ubiquitinated by a SCF (SKP1-CUL1-F-box protein) E3 ubiquitin-protein ligase complex that contains FBXO7 and PRKN. As to expression, detected in kidney and heart (at protein level). Ubiquitous. Expressed at slightly higher level in kidney and heart. Isoform 2 may be overexpressed in some tumors, such as lung cancers.

It localises to the mitochondrion outer membrane. It is found in the cytoplasm. It catalyses the reaction GTP + H2O = GDP + phosphate + H(+). Mitochondrial outer membrane GTPase that mediates mitochondrial clustering and fusion. Membrane clustering requires GTPase activity. It may involve a major rearrangement of the coiled coil domains. Mitochondria are highly dynamic organelles, and their morphology is determined by the equilibrium between mitochondrial fusion and fission events. Overexpression induces the formation of mitochondrial networks (in vitro). Has low GTPase activity. In Homo sapiens (Human), this protein is Mitofusin-1 (MFN1).